The sequence spans 516 residues: Maintenance of mitochondrial morphology protein 1 (516 aa).

Topologically, residues 1–43 (MAGSTSASLQTPYFPSSTQINPVRVDHTLPLPPAQPSLSFTQG) are lumenal. A helical transmembrane segment spans residues 44 to 64 (LLVGQLSVVLLIGAFIKFFIF). The Cytoplasmic segment spans residues 65 to 516 (GEAPPPPSRG…GSMPDTVTET (452 aa)). Disordered regions lie at residues 70-118 (PPSR…SSST), 295-349 (TSDQ…SKHG), 420-466 (RTGL…IDRG), and 485-516 (GGHQNQSGRDGGRGGNEQFAMPGSMPDTVTET). 3 stretches are compositionally biased toward polar residues: residues 74–96 (GLSNRTSTHPRSYSINAASTDSS), 105–118 (STSNILRPVPSSST), and 295–312 (TSDQTMSPIPTPHDTTSE). Residues 151-412 (QPESLDWFNV…EPRVQVVGLP (262 aa)) enclose the SMP-LTD domain. The segment covering 449-460 (GVSGGGGGGGSM) has biased composition (gly residues).

It belongs to the MMM1 family. Homodimer. Component of the ER-mitochondria encounter structure (ERMES) or MDM complex, composed of MMM1, MDM10, MDM12 and MDM34. An MMM1 homodimer associates with one molecule of MDM12 on each side in a pairwise head-to-tail manner, and the SMP-LTD domains of MMM1 and MDM12 generate a continuous hydrophobic tunnel for phospholipid trafficking.

Its subcellular location is the endoplasmic reticulum membrane. Its function is as follows. Component of the ERMES/MDM complex, which serves as a molecular tether to connect the endoplasmic reticulum (ER) and mitochondria. Components of this complex are involved in the control of mitochondrial shape and protein biogenesis, and function in nonvesicular lipid trafficking between the ER and mitochondria. The MDM12-MMM1 subcomplex functions in the major beta-barrel assembly pathway that is responsible for biogenesis of all outer membrane beta-barrel proteins, and acts in a late step after the SAM complex. The MDM10-MDM12-MMM1 subcomplex further acts in the TOM40-specific pathway after the action of the MDM12-MMM1 complex. Essential for establishing and maintaining the structure of mitochondria and maintenance of mtDNA nucleoids. The chain is Maintenance of mitochondrial morphology protein 1 from Paracoccidioides brasiliensis (strain Pb18).